Reading from the N-terminus, the 430-residue chain is Enolase (430 aa).

Gln162 contributes to the (2R)-2-phosphoglycerate binding site. Residue Glu204 is the Proton donor of the active site. 3 residues coordinate Mg(2+): Asp241, Glu283, and Asp310. Lys335, Arg364, Ser365, and Lys386 together coordinate (2R)-2-phosphoglycerate. The active-site Proton acceptor is Lys335.

Belongs to the enolase family. Mg(2+) serves as cofactor.

The protein resides in the cytoplasm. Its subcellular location is the secreted. It localises to the cell surface. The catalysed reaction is (2R)-2-phosphoglycerate = phosphoenolpyruvate + H2O. It functions in the pathway carbohydrate degradation; glycolysis; pyruvate from D-glyceraldehyde 3-phosphate: step 4/5. Functionally, catalyzes the reversible conversion of 2-phosphoglycerate (2-PG) into phosphoenolpyruvate (PEP). It is essential for the degradation of carbohydrates via glycolysis. The sequence is that of Enolase from Mycobacteroides abscessus (strain ATCC 19977 / DSM 44196 / CCUG 20993 / CIP 104536 / JCM 13569 / NCTC 13031 / TMC 1543 / L948) (Mycobacterium abscessus).